The primary structure comprises 599 residues: Proline--tRNA ligase (599 aa).

It belongs to the class-II aminoacyl-tRNA synthetase family. ProS type 1 subfamily. Homodimer.

Its subcellular location is the cytoplasm. The enzyme catalyses tRNA(Pro) + L-proline + ATP = L-prolyl-tRNA(Pro) + AMP + diphosphate. Its function is as follows. Catalyzes the attachment of proline to tRNA(Pro) in a two-step reaction: proline is first activated by ATP to form Pro-AMP and then transferred to the acceptor end of tRNA(Pro). As ProRS can inadvertently accommodate and process non-cognate amino acids such as alanine and cysteine, to avoid such errors it has two additional distinct editing activities against alanine. One activity is designated as 'pretransfer' editing and involves the tRNA(Pro)-independent hydrolysis of activated Ala-AMP. The other activity is designated 'posttransfer' editing and involves deacylation of mischarged Ala-tRNA(Pro). The misacylated Cys-tRNA(Pro) is not edited by ProRS. The chain is Proline--tRNA ligase from Prochlorococcus marinus (strain MIT 9313).